We begin with the raw amino-acid sequence, 618 residues long: DELLA protein SLN1 (618 aa).

Residues 1–36 (MKREYQDGGGSGGGGDEMGSSRDKMMVSSSEAGEGE) are disordered. Residues 7-17 (DGGGSGGGGDE) show a composition bias toward gly residues. The short motif at 39-43 (DELLA) is the DELLA motif element. Disordered regions lie at residues 106–137 (LNAP…YFDL) and 159–197 (APAD…GAAR). Positions 108–118 (APPPPLPPAPP) are enriched in pro residues. Low complexity-rich tracts occupy residues 119–128 (QLNASTSSTV) and 176–197 (TGGS…GAAR). One can recognise a GRAS domain in the interval 221 to 614 (VDTQEAGIRL…RPLIATSAWR (394 aa)). The leucine repeat I (LRI) stretch occupies residues 228 to 284 (IRLVHALLACAEAVQQENLSAAEALVKQIPLLAASQGGAMRKVAAYFGEALARRVFR). Residues 235 to 239 (LACAE) carry the LxCxE motif motif. A VHIID region spans residues 303–368 (HAHFYESCPY…GGPPSFRLTG (66 aa)). The short motif at 334-338 (VHVVD) is the VHIID element. Positions 382 to 421 (QVGWKLAQFAHTIRVDFQYRGLVAATLADLEPFMLQPEGE) are leucine repeat II (LRII). Residues 431-535 (IAVNSVFEMH…EVYLGRQICN (105 aa)) form a PFYRE region. The interval 538 to 614 (ACEGTERTER…RPLIATSAWR (77 aa)) is SAW.

It belongs to the GRAS family. DELLA subfamily. In terms of processing, phosphorylated. Post-translationally, ubiquitinated. Upon GA application it is ubiquitinated, leading to its subsequent degradation. In terms of tissue distribution, apparently restricted to regions where growth is occurring in the leaf blade. Localizes almost exclusively to the basal elongation zone (EZ) for the elongating blades of L1, L2 and L3. More detailed fractionation of the L3 blade shows that in cv. Himalaya, it is preferentially localized to the basal third of the EZ, but its presence can still be detected toward the end of the EZ (at protein level).

It localises to the nucleus. Its function is as follows. Probable transcriptional regulator that acts as a repressor of the gibberellin (GA) signaling pathway. Probably acts by participating in large multiprotein complexes that repress transcription of GA-inducible genes. Upon GA application, it is degraded by the proteasome, allowing the GA signaling pathway. Acts as a negative regulator of GAMYB gene expression. The chain is DELLA protein SLN1 (SLN1) from Hordeum vulgare (Barley).